Reading from the N-terminus, the 285-residue chain is Urease accessory protein UreD 1 (285 aa).

Belongs to the UreD family. In terms of assembly, ureD, UreF and UreG form a complex that acts as a GTP-hydrolysis-dependent molecular chaperone, activating the urease apoprotein by helping to assemble the nickel containing metallocenter of UreC. The UreE protein probably delivers the nickel.

The protein localises to the cytoplasm. Functionally, required for maturation of urease via the functional incorporation of the urease nickel metallocenter. This is Urease accessory protein UreD 1 from Pseudomonas syringae pv. syringae (strain B728a).